We begin with the raw amino-acid sequence, 529 residues long: Peptide chain release factor 3 (529 aa).

The tr-type G domain maps to 11–280 (AKRRTFAIIS…GLVEWAPAPM (270 aa)). GTP contacts are provided by residues 20-27 (SHPDAGKT), 88-92 (DTPGH), and 142-145 (NKLD).

It belongs to the TRAFAC class translation factor GTPase superfamily. Classic translation factor GTPase family. PrfC subfamily.

The protein localises to the cytoplasm. Its function is as follows. Increases the formation of ribosomal termination complexes and stimulates activities of RF-1 and RF-2. It binds guanine nucleotides and has strong preference for UGA stop codons. It may interact directly with the ribosome. The stimulation of RF-1 and RF-2 is significantly reduced by GTP and GDP, but not by GMP. The sequence is that of Peptide chain release factor 3 from Shigella flexneri serotype 5b (strain 8401).